The chain runs to 1712 residues: Latent-transforming growth factor beta-binding protein 1 (1712 aa).

A signal peptide spans 1–20; the sequence is MAGAWLRWGLLLWAGLLAWS. The disordered stretch occupies residues 63 to 148; it reads SSTATSSRSL…QDTQSSGGSR (86 aa). The span at 136-147 shows a compositional bias: polar residues; sequence KVQQDTQSSGGS. Positions 181–213 constitute an EGF-like 1 domain; the sequence is TKPSCVPPCQNGGMCLRPQFCVCKPGTKGKACE. Intrachain disulfides connect Cys185–Cys195, Cys189–Cys201, and Cys203–Cys212. 2 N-linked (GlcNAc...) asparagine glycosylation sites follow: Asn339 and Asn370. The EGF-like 2 domain occupies 391–423; it reads RVVICHLPCMNGGQCSSRDKCQCPPNFTGKLCQ. Intrachain disulfides connect Cys395–Cys405, Cys399–Cys411, Cys413–Cys422, Cys551–Cys573, Cys560–Cys586, and Cys574–Cys589. An N-linked (GlcNAc...) asparagine glycan is attached at Asn416. In terms of domain architecture, TB 1 spans 549–601; that stretch reads GRCFQETIGSQCGKALPGLSKQEDCCGTVGTSWGFNKCQKCPKKQSYHGYTQM. N-linked (GlcNAc...) asparagine glycosylation occurs at Asn612. The EGF-like 3; calcium-binding domain occupies 618–658; sequence DINECQLQGVCPNGECLNTMGSYRCSCKMGFGPDPTFSSCV. Disulfide bonds link Cys622/Cys633, Cys628/Cys642, Cys644/Cys657, Cys671/Cys694, Cys681/Cys706, Cys695/Cys709, and Cys696/Cys721. O-linked (Glc) serine glycosylation occurs at Ser639. One can recognise a TB 2 domain in the interval 669-721; sequence GPCYRLVSPGRQCMHPLSVHLTKQICCCSVGKAWGPQCEKCPLPGTAAFKEIC. The disordered stretch occupies residues 752–803; sequence KNTQPVAKSTHPPPLPAKEEPVEALTSSREHGPGVAEPEVVTAPPEKEIPSL. Residues Thr761 and Thr793 are each glycosylated (O-linked (GalNAc...) threonine). In terms of domain architecture, EGF-like 4; calcium-binding spans 865 to 906; that stretch reads EINECTVNPDICGAGHCINLPVRYTCICYEGYKFSEQQRKCI. Disulfide bonds link Cys869–Cys881, Cys876–Cys890, Cys892–Cys905, Cys911–Cys923, Cys918–Cys932, Cys934–Cys947, Cys953–Cys964, Cys959–Cys973, Cys976–Cys988, Cys994–Cys1005, Cys1000–Cys1014, Cys1017–Cys1028, Cys1034–Cys1045, Cys1040–Cys1054, Cys1056–Cys1069, Cys1075–Cys1086, Cys1081–Cys1095, Cys1097–Cys1110, Cys1116–Cys1127, Cys1122–Cys1136, Cys1138–Cys1151, Cys1157–Cys1169, Cys1164–Cys1178, Cys1180–Cys1192, Cys1198–Cys1210, Cys1204–Cys1219, Cys1221–Cys1234, Cys1240–Cys1252, Cys1246–Cys1261, Cys1263–Cys1276, Cys1282–Cys1294, Cys1289–Cys1303, Cys1305–Cys1319, Cys1340–Cys1363, Cys1350–Cys1375, Cys1364–Cys1380, and Cys1365–Cys1392. Residues 907-948 form the EGF-like 5; calcium-binding domain; sequence DIDECAQAQHLCSQGRCENTEGSFLCICPAGFIASEEGSNCI. O-linked (Glc) serine glycosylation occurs at Ser929. The 41-residue stretch at 949 to 989 folds into the EGF-like 6; calcium-binding domain; it reads DVDECLRPDVCRDGRCINTAGAFRCEYCDSGYRMSRRGHCE. Position 966 is a (3R)-3-hydroxyasparagine (Asn966). The EGF-like 7; calcium-binding domain maps to 990–1029; that stretch reads DIDECLTPSTCPEEQCVNSPGSYQCVPCTEGFRGWNGQCL. Ser1011 carries an O-linked (Glc) serine glycan. The EGF-like 8; calcium-binding domain occupies 1030-1070; sequence DVDECLQPKVCTNGSCTNLEGSYMCSCHKGYSPTPDHRHCQ. A glycan (N-linked (GlcNAc...) asparagine) is linked at Asn1042. Ser1051 is a glycosylation site (O-linked (Glc) serine). The EGF-like 9; calcium-binding domain maps to 1071-1111; the sequence is DIDECQQGNLCMNGQCKNTDGSFRCTCGQGYQLSAAKDQCE. In terms of domain architecture, EGF-like 10; calcium-binding spans 1112–1152; the sequence is DIDECEHRHLCSHGQCRNTEGSFQCLCNQGYRASVLGDHCE. Asn1129 bears the (3R)-3-hydroxyasparagine mark. Ser1133 is a glycosylation site (O-linked (Glc) serine). Residues 1153–1193 form the EGF-like 11; calcium-binding domain; the sequence is DINECLEDSSVCQGGDCINTAGSYDCTCPDGLQLNDNKGCQ. Positions 1194 to 1235 constitute an EGF-like 12; calcium-binding domain; the sequence is DINECAQPGLCAPHGECLNTQGSFHCVCEQGFSISADGRTCE. The O-linked (Glc) serine glycan is linked to Ser1216. An EGF-like 13; calcium-binding domain is found at 1236 to 1277; sequence DIDECVNNTVCDSHGFCDNTAGSFRCLCYQGFQAPQDGQGCV. N-linked (GlcNAc...) asparagine glycosylation occurs at Asn1242. The region spanning 1278 to 1320 is the EGF-like 14; calcium-binding domain; it reads DVNECELLSGVCGEAFCENVEGSFLCVCADENQEYSPMTGQCR. The segment at 1335-1402 is 8-Cys3 region; the sequence is EEKKECYYNL…PRGKGFVPAG (68 aa). Positions 1338–1392 constitute a TB 3 domain; that stretch reads KECYYNLNDASLCDNVLAPNVTKQECCCTSGAGWGDNCEIFPCPVQGTAEFSEMC. N-linked (GlcNAc...) asparagine glycosylation is present at Asn1357. Ser1405 carries the phosphoserine modification. An EGF-like 15; calcium-binding domain is found at 1415 to 1457; sequence DADECLLFGEEICKNGYCLNTQPGYECYCKEGTYYDPVKLQCF. 10 disulfide bridges follow: Cys1419-Cys1432, Cys1427-Cys1441, Cys1443-Cys1456, Cys1462-Cys1473, Cys1468-Cys1482, Cys1484-Cys1497, Cys1517-Cys1541, Cys1527-Cys1553, Cys1542-Cys1556, and Cys1543-Cys1568. Residues 1458–1498 form the EGF-like 16; calcium-binding domain; sequence DMDECQDPNSCIDGQCVNTEGSYNCFCTHPMVLDASEKRCV. A glycan (O-linked (Glc) serine) is linked at Ser1479. A C-terminal domain region spans residues 1498–1712; sequence VQPTESNEQI…LNLDKDSDLE (215 aa). One can recognise a TB 4 domain in the interval 1515–1568; the sequence is DLCWEHLSEEYVCSRPLVGKQTTYTECCCLYGEAWGMQCALCPMKDSDDYAQLC. Residues Ser1588 and Ser1607 each carry the phosphoserine modification. Residues 1612-1652 form the EGF-like 17 domain; that stretch reads QAEECGILNGCENGRCVRVQEGYTCDCFDGYHLDMAKMTCV. Intrachain disulfides connect Cys1616–Cys1627, Cys1622–Cys1636, Cys1638–Cys1651, Cys1657–Cys1672, Cys1667–Cys1681, and Cys1683–Cys1696. In terms of domain architecture, EGF-like 18; calcium-binding spans 1653–1697; it reads DVNECSELNNRMSLCKNAKCINTEGSYKCVCLPGYVPSDKPNYCT. An O-linked (Glc) serine glycan is attached at Ser1678.

It belongs to the LTBP family. As to quaternary structure, interacts with TGFB1; associates via disulfide bonds with the Latency-associated peptide chain (LAP) regulatory chain of TGFB1, leading to regulate activation of TGF-beta-1. LTBP1 does not bind directly to TGF-beta-1, the active chain of TGFB1. Interacts (via C-terminal domain) with FBN1 (via N-terminal domain). Interacts with FBN2. Interacts with ADAMTSL2. Interacts with EFEMP2. In terms of processing, contains hydroxylated asparagine residues. Post-translationally, two intrachain disulfide bonds from the TB3 domain are rearranged upon TGFB1 binding, and form interchain bonds with TGFB1 propeptide, anchoring it to the extracellular matrix. O-glycosylated on serine residues by POGLUT2 and POGLUT3.

It localises to the secreted. It is found in the extracellular space. The protein resides in the extracellular matrix. Functionally, key regulator of transforming growth factor beta (TGFB1, TGFB2 and TGFB3) that controls TGF-beta activation by maintaining it in a latent state during storage in extracellular space. Associates specifically via disulfide bonds with the Latency-associated peptide (LAP), which is the regulatory chain of TGF-beta, and regulates integrin-dependent activation of TGF-beta. Outcompeted by LRRC32/GARP for binding to LAP regulatory chain of TGF-beta. This is Latent-transforming growth factor beta-binding protein 1 (Ltbp1) from Rattus norvegicus (Rat).